The chain runs to 305 residues: Fatty acid elongase 1 (305 aa).

Transmembrane regions (helical) follow at residues 24-44 (MIAN…FVFI), 80-100 (VVWN…VTPV), 129-149 (FWMG…IFLV), 158-178 (FLHW…YCVG), 183-203 (IWVA…FALA), 217-237 (YITI…IFAL), and 257-277 (IQLV…VASY). Positions 160–164 (HWYHH) match the HxxHH motif motif. His-163 (nucleophile) is an active-site residue. Residues 284-305 (PTVGGPSSTAGVSNGSVEKKVK) are disordered. Polar residues predominate over residues 288–299 (GPSSTAGVSNGS). N-linked (GlcNAc...) asparagine glycosylation is present at Asn-297.

The protein belongs to the ELO family.

It localises to the endoplasmic reticulum membrane. It carries out the reaction an acyl-CoA + malonyl-CoA + H(+) = a 3-oxoacyl-CoA + CO2 + CoA. Its pathway is lipid metabolism; fatty acid biosynthesis. In terms of biological role, involved in the synthesis of fatty acids. Elongates C4 fatty acids to C10. In Trypanosoma brucei brucei (strain 927/4 GUTat10.1), this protein is Fatty acid elongase 1.